The primary structure comprises 277 residues: Diaminopimelate epimerase (277 aa).

Asn-13, Gln-46, and Asn-66 together coordinate substrate. The active-site Proton donor is the Cys-75. Residues 76 to 77 (GN), Asn-160, Asn-193, and 211 to 212 (ER) each bind substrate. Cys-220 acts as the Proton acceptor in catalysis. 221–222 (GS) serves as a coordination point for substrate.

The protein belongs to the diaminopimelate epimerase family. In terms of assembly, homodimer.

It is found in the cytoplasm. It carries out the reaction (2S,6S)-2,6-diaminopimelate = meso-2,6-diaminopimelate. It participates in amino-acid biosynthesis; L-lysine biosynthesis via DAP pathway; DL-2,6-diaminopimelate from LL-2,6-diaminopimelate: step 1/1. Its function is as follows. Catalyzes the stereoinversion of LL-2,6-diaminopimelate (L,L-DAP) to meso-diaminopimelate (meso-DAP), a precursor of L-lysine and an essential component of the bacterial peptidoglycan. This Legionella pneumophila subsp. pneumophila (strain Philadelphia 1 / ATCC 33152 / DSM 7513) protein is Diaminopimelate epimerase.